The chain runs to 665 residues: Probable arginine--tRNA ligase, cytoplasmic (665 aa).

L-arginine contacts are provided by residues 204–206 (SPN), histidine 215, tyrosine 390, aspartate 394, and glutamine 418. The short motif at 205 to 216 (PNIAKQMHVGHL) is the 'HIGH' region element. The segment at 535–549 (NTAVYLLYTYTRICS) is interaction with tRNA.

The protein belongs to the class-I aminoacyl-tRNA synthetase family.

The protein resides in the cytoplasm. Its subcellular location is the cytosol. It catalyses the reaction tRNA(Arg) + L-arginine + ATP = L-arginyl-tRNA(Arg) + AMP + diphosphate. Forms part of a macromolecular complex that catalyzes the attachment of specific amino acids to cognate tRNAs during protein synthesis. This chain is Probable arginine--tRNA ligase, cytoplasmic, found in Drosophila melanogaster (Fruit fly).